The primary structure comprises 264 residues: tRNA pseudouridine synthase A (264 aa).

D51 acts as the Nucleophile in catalysis. Position 109 (Y109) interacts with substrate.

This sequence belongs to the tRNA pseudouridine synthase TruA family. In terms of assembly, homodimer.

It carries out the reaction uridine(38/39/40) in tRNA = pseudouridine(38/39/40) in tRNA. Formation of pseudouridine at positions 38, 39 and 40 in the anticodon stem and loop of transfer RNAs. In Vibrio cholerae serotype O1 (strain ATCC 39541 / Classical Ogawa 395 / O395), this protein is tRNA pseudouridine synthase A.